The chain runs to 363 residues: Glyceraldehyde-3-phosphate dehydrogenase, muscle (363 aa).

Residues 1 to 176 (MVKVGVNGFG…KYDKSLKIVS (176 aa)) are interaction with WARS. Lys3 is modified (N6,N6-dimethyllysine). Asn7 carries the deamidated asparagine modification. Residues 11-12 (RI) and Asp33 each bind NAD(+). Residue Tyr70 is modified to Phosphotyrosine. The residue at position 89 (Lys89) is an N6-acetyllysine. Asn92 is modified (deamidated asparagine). Lys94 carries the N6,N6-dimethyllysine modification. Asn98 is subject to Deamidated asparagine. Thr103 is modified (phosphothreonine). Positions 108 and 150 each coordinate NAD(+). Residues Ser150 and Ser176 each carry the phosphoserine modification. A Deamidated asparagine modification is found at Asn177. Ser179 is subject to Phosphoserine. 179 to 181 (SCT) contributes to the D-glyceraldehyde 3-phosphate binding site. Residue Cys180 is the Nucleophile of the active site. An ADP-ribosylcysteine; by autocatalysis; in irreversibly inhibited form modification is found at Cys180. Position 180 is a cysteine persulfide (Cys180). At Cys180 the chain carries S-(2-succinyl)cysteine. Cys180 is modified (S-nitrosocysteine; in reversibly inhibited form). Residue Thr181 is modified to Phosphothreonine. At Asn183 the chain carries Deamidated asparagine. Thr205, Thr210, and Thr212 each carry phosphothreonine. Thr210 contributes to the D-glyceraldehyde 3-phosphate binding site. A Glycyl lysine isopeptide (Lys-Gly) (interchain with G-Cter in SUMO2) cross-link involves residue Lys214. N6,N6-dimethyllysine; alternate is present on Lys222. Lys222 carries the N6-acetyllysine; alternate modification. Residue Lys222 is modified to N6-malonyllysine; alternate. Residue Thr239 is modified to Phosphothreonine. Residue 239–240 (TG) coordinates D-glyceraldehyde 3-phosphate. Lys243 carries the post-translational modification N6,N6-dimethyllysine; alternate. Lys243 carries the post-translational modification N6-malonyllysine; alternate. Position 247 is an N6-acetyllysine (Lys247). Residue Asn253 is modified to Deamidated asparagine. The residue at position 255 (Lys255) is an N6,N6-dimethyllysine; alternate. Lys255 carries the N6-acetyllysine; alternate modification. At Thr257 the chain carries Phosphothreonine. Arg262 lines the D-glyceraldehyde 3-phosphate pocket. Thr265 carries the phosphothreonine modification. Residue Ser269 is modified to Phosphoserine. Cys275 bears the S-(2-succinyl)cysteine mark. Cys275 carries the post-translational modification S-nitrosocysteine. Lys282 carries the N6-acetyllysine modification. Lys291 carries the N6,N6-dimethyllysine modification. The residue at position 340 (Ser340) is a Phosphoserine. Position 344 is a deamidated asparagine (Asn344). Asn344 lines the NAD(+) pocket. Position 361 is a phosphoserine (Ser361). Lys362 bears the N6,N6-dimethyllysine mark.

This sequence belongs to the glyceraldehyde-3-phosphate dehydrogenase family. Homotetramer. Interacts with TPPP; the interaction is direct. Interacts (when S-nitrosylated) with SIAH1; leading to nuclear translocation. Interacts with RILPL1/GOSPEL, leading to prevent the interaction between GAPDH and SIAH1 and prevent nuclear translocation. Interacts with CHP1; the interaction increases the binding of CHP1 with microtubules. Associates with microtubules. Interacts with EIF1AD, USP25, PRKCI and WARS1. Interacts with phosphorylated RPL13A; inhibited by oxidatively-modified low-densitity lipoprotein (LDL(ox)). Component of the GAIT complex. Interacts with FKBP6; leading to inhibit GAPDH catalytic activity. Interacts with TRAF2, promoting TRAF2 ubiquitination. Interacts with TRAF3, promoting TRAF3 ubiquitination. In terms of processing, ISGylated. Post-translationally, S-nitrosylation of Cys-180 leads to interaction with SIAH1, followed by translocation to the nucleus S-nitrosylation of Cys-275 is induced by interferon-gamma and LDL(ox) implicating the iNOS-S100A8/9 transnitrosylase complex and seems to prevent interaction with phosphorylated RPL13A and to interfere with GAIT complex activity. Sulfhydration at Cys-180 increases catalytic activity.

It is found in the cytoplasm. The protein resides in the cytosol. Its subcellular location is the cytoskeleton. It localises to the nucleus. The enzyme catalyses D-glyceraldehyde 3-phosphate + phosphate + NAD(+) = (2R)-3-phospho-glyceroyl phosphate + NADH + H(+). It catalyses the reaction S-nitroso-L-cysteinyl-[GAPDH] + L-cysteinyl-[protein] = L-cysteinyl-[GAPDH] + S-nitroso-L-cysteinyl-[protein]. Its pathway is carbohydrate degradation; glycolysis; pyruvate from D-glyceraldehyde 3-phosphate: step 1/5. With respect to regulation, glyceraldehyde-3-phosphate dehydrogenase activity is inhibited by fumarate, via the formation of S-(2-succinyl)cysteine residues. Functionally, has both glyceraldehyde-3-phosphate dehydrogenase and nitrosylase activities, thereby playing a role in glycolysis and nuclear functions, respectively. Glyceraldehyde-3-phosphate dehydrogenase is a key enzyme in glycolysis that catalyzes the first step of the pathway by converting D-glyceraldehyde 3-phosphate (G3P) into 3-phospho-D-glyceroyl phosphate. Modulates the organization and assembly of the cytoskeleton. Facilitates the CHP1-dependent microtubule and membrane associations through its ability to stimulate the binding of CHP1 to microtubules. Component of the GAIT (gamma interferon-activated inhibitor of translation) complex which mediates interferon-gamma-induced transcript-selective translation inhibition in inflammation processes. Upon interferon-gamma treatment assembles into the GAIT complex which binds to stem loop-containing GAIT elements in the 3'-UTR of diverse inflammatory mRNAs (such as ceruplasmin) and suppresses their translation. Also plays a role in innate immunity by promoting TNF-induced NF-kappa-B activation and type I interferon production, via interaction with TRAF2 and TRAF3, respectively. Participates in nuclear events including transcription, RNA transport, DNA replication and apoptosis. Nuclear functions are probably due to the nitrosylase activity that mediates cysteine S-nitrosylation of nuclear target proteins such as SIRT1, HDAC2 and PRKDC. The polypeptide is Glyceraldehyde-3-phosphate dehydrogenase, muscle (Jaculus orientalis (Greater Egyptian jerboa)).